A 798-amino-acid polypeptide reads, in one-letter code: Integrin beta-1 (798 aa).

The N-terminal stretch at 1 to 20 (MNLQPIFWIGLISSICCVFA) is a signal peptide. In terms of domain architecture, PSI spans 26–76 (RCLKANAKSCGECIQAGPNCGWCTNSTFLQEGMPTSARCDDLEALKKKGCP). Disulfide bonds link Cys27/Cys45, Cys35/Cys464, Cys38/Cys64, Cys48/Cys75, Cys207/Cys213, Cys261/Cys301, Cys401/Cys415, Cys435/Cys462, Cys466/Cys486, Cys477/Cys489, Cys491/Cys500, Cys502/Cys533, Cys516/Cys531, Cys525/Cys536, Cys538/Cys553, Cys555/Cys576, Cys560/Cys574, Cys568/Cys579, Cys581/Cys590, Cys592/Cys615, Cys599/Cys613, Cys607/Cys618, Cys620/Cys630, Cys633/Cys636, Cys640/Cys691, Cys646/Cys665, Cys649/Cys661, and Cys699/Cys723. Residue Asn50 is glycosylated (N-linked (GlcNAc...) asparagine). Positions 75 to 107 (CPPDDIENPRGSKDIKKNKNVTNRSKGTAEKLK) are disordered. Basic and acidic residues predominate over residues 81–91 (ENPRGSKDIKK). N-linked (GlcNAc...) asparagine glycosylation is found at Asn94 and Asn97. The region spanning 140–378 (DYPIDLYYLM…QLIIDAYNSL (239 aa)) is the VWFA domain. Mg(2+) contacts are provided by Ser152 and Ser154. Ca(2+) is bound by residues Ser154, Asp157, Asp158, and Glu189. The interval 207 to 213 (CTSEQNC) is CX3CL1-binding. An N-linked (GlcNAc...) asparagine glycan is attached at Asn212. Residues Asn244, Asp246, Pro248, and Glu249 each contribute to the Ca(2+) site. Glu249 contributes to the Mg(2+) binding site. An N-linked (GlcNAc...) asparagine glycan is attached at Asn269. Residues 295-314 (LPNDGQCHLENNMYTMSHYY) form a CX3CL1-binding region. Residue Ala362 coordinates Ca(2+). N-linked (GlcNAc...) asparagine glycans are attached at residues Asn363, Asn406, and Asn417. Residues 383 to 465 (ILENSKLSEG…VILQYICECE (83 aa)) form an interaction with TMEM182 region. 4 consecutive I-EGF domains span residues 466-501 (CQSEGIPESPKCHEGNGTFECGACRCNEGRVGRHCE), 502-554 (CSTD…KFCE), 555-591 (CDNFNCDRSNGLICGGNGVCKCRVCECNPNYTGSACD), and 592-631 (CSLDTSTCEASNGQICNGRGICECGVCKCTDPKFQGQTCE). N-linked (GlcNAc...) asparagine glycosylation occurs at Asn481. Asn520 is a glycosylation site (N-linked (GlcNAc...) asparagine). The N-linked (GlcNAc...) asparagine glycan is linked to Asn584. Asn669 carries N-linked (GlcNAc...) asparagine glycosylation. A helical membrane pass occupies residues 729 to 749 (IIPIVAGVVAGIVLIGLALLL). The tract at residues 762 to 767 (EFAKFE) is signal for sorting from recycling endosomes; interaction with ACAP1. Thr777 bears the Phosphothreonine mark. At Tyr783 the chain carries Phosphotyrosine. The residue at position 785 (Ser785) is a Phosphoserine. The segment at 785–792 (SAVTTVVN) is interaction with ITGB1BP1. At Thr789 the chain carries Phosphothreonine. Position 794 is an N6-acetyllysine; alternate (Lys794). Lys794 is covalently cross-linked (Glycyl lysine isopeptide (Lys-Gly) (interchain with G-Cter in SUMO1); alternate).

This sequence belongs to the integrin beta chain family. Interacts with seprase FAP (seprase); the interaction occurs at the cell surface of invadopodia membrane in a collagen-dependent manner. Heterodimer of an alpha and a beta subunit. Beta-1 associates with either alpha-1, alpha-2, alpha-3, alpha-4, alpha-5, alpha-6, alpha-7, alpha-8, alpha-9, alpha-10, alpha-11 or alpha-V. ITGA6:ITGB1 is found in a complex with CD9; interaction takes place in oocytes and is involved in sperm-egg fusion. Binds LGALS3BP and NMRK2, when associated with alpha-7, but not with alpha-5. Interacts with FLNA, FLNB, FLNC and RANBP9. Interacts with KRT1 in the presence of RACK1 and SRC. Interacts with JAML; integrin alpha-4/beta-1 may regulate leukocyte to endothelial cells adhesion by controlling JAML homodimerization. Interacts with RAB21. Interacts (via the cytoplasmic region) with RAB25 (via the hypervariable C-terminal region). Interacts with MYO10. Interacts with ITGB1BP1 (via C-terminal region); the interaction is a prerequisite for focal adhesion disassembly. Interacts with TLN1; the interaction is prevented by competitive binding of ITGB1BP1. Interacts with ACAP1; required for ITGB1 recycling. Interacts with ASAP3. Interacts with FERMT2; the interaction is inhibited in presence of ITGB1BP1. Interacts with DAB2. Interacts with FGR and HCK. Interacts with alpha-7A and alpha-7B in adult skeletal muscle. Interacts with alpha-7B in cardiomyocytes of adult heart. Interacts with EMP2; the interaction may be direct or indirect and ITGB1 has a heterodimer form. ITGA5:ITGB1 interacts with CCN3. ITGA4:ITGB1 is found in a ternary complex with CX3CR1 and CX3CL1. ITGA5:ITGB1 interacts with FBN1. ITGA5:ITGB1 acts as a receptor for fibronectin FN1 and mediates R-G-D-dependent cell adhesion to FN1. ITGA5:ITGB1 interacts with IL1B. Interacts with MDK. ITGA4:ITGB1 interacts with MDK; this interaction mediates MDK-induced osteoblast cells migration through PXN phosphorylation. ITGA6:ITGB1 interacts with MDK; this interaction mediates MDK-induced neurite-outgrowth. ITGA5:ITGB1 interacts with ACE2. Interacts with TMEM182 and LAMB1. Interacts with tensin TNS3; TNS3 also interacts with PEAK1, thus acting as an adapter molecule to bridge the association of PEAK1 with ITGB1. Interacts with tensin TNS4; the interaction displaces tensin TNS3 from the ITGB1 cytoplasmic tail and promotes ITGB1 stability. Integrin ITGA9:ITGB1 interacts with SPP1/OPN (via N-terminus). Integrin ITGA9:ITGB1 interacts with TNC/TNFN3 (via the 3rd Fibronectin type-III domain). Integrins ITGA4:ITGB1 and ITGA9:ITGB1 interact with SVEP1 (via Sushi domain 21); thereby inhibit Ca(2+) intracellular signaling and as a result repress vasocontraction. ITGA4:ITGB1 and ITGA5:ITGB1 interacts with SELP. Interacts with CD248. ITGA5:ITGB1 interacts with IGFBP1. ITGA4:ITGB1 interacts with BCAM. Interacts with ADGRG6.

The protein resides in the cell membrane. It localises to the cell projection. It is found in the invadopodium membrane. Its subcellular location is the ruffle membrane. The protein localises to the recycling endosome. The protein resides in the melanosome. It localises to the lamellipodium. It is found in the ruffle. Its subcellular location is the cell junction. The protein localises to the focal adhesion. Integrins alpha-1/beta-1, alpha-2/beta-1, alpha-10/beta-1 and alpha-11/beta-1 are receptors for collagen. Integrins alpha-1/beta-1 and alpha-2/beta-2 recognize the proline-hydroxylated sequence G-F-P-G-E-R in collagen. Integrins alpha-2/beta-1, alpha-3/beta-1, alpha-4/beta-1, alpha-5/beta-1, alpha-8/beta-1, alpha-10/beta-1, alpha-11/beta-1 and alpha-V/beta-1 are receptors for fibronectin. Alpha-4/beta-1 recognizes one or more domains within the alternatively spliced CS-1 and CS-5 regions of fibronectin. Integrin alpha-5/beta-1 is a receptor for fibrinogen. Integrin alpha-1/beta-1, alpha-2/beta-1, alpha-6/beta-1 and alpha-7/beta-1 are receptors for lamimin. Integrin alpha-6/beta-1 (ITGA6:ITGB1) is present in oocytes and is involved in sperm-egg fusion. Integrin alpha-4/beta-1 is a receptor for VCAM1 and recognizes the sequence Q-I-D-S in VCAM1. Integrin alpha-9/beta-1 is a receptor for VCAM1, cytotactin and osteopontin. It recognizes the sequence A-E-I-D-G-I-E-L in cytotactin. Integrin alpha-3/beta-1 is a receptor for epiligrin, thrombospondin and CSPG4. Integrin alpha-3/beta-1 provides a docking site for FAP (seprase) at invadopodia plasma membranes in a collagen-dependent manner and hence may participate in the adhesion, formation of invadopodia and matrix degradation processes, promoting cell invasion. Alpha-3/beta-1 may mediate with LGALS3 the stimulation by CSPG4 of endothelial cells migration. Integrin alpha-V/beta-1 is a receptor for vitronectin. Beta-1 integrins recognize the sequence R-G-D in a wide array of ligands. When associated with alpha-7/beta-1 integrin, regulates cell adhesion and laminin matrix deposition. Involved in promoting endothelial cell motility and angiogenesis. Involved in osteoblast compaction through the fibronectin fibrillogenesis cell-mediated matrix assembly process and the formation of mineralized bone nodules. May be involved in up-regulation of the activity of kinases such as PKC via binding to KRT1. Together with KRT1 and RACK1, serves as a platform for SRC activation or inactivation. Plays a mechanistic adhesive role during telophase, required for the successful completion of cytokinesis. ITGA4:ITGB1 binds to fractalkine (CX3CL1) and may act as its coreceptor in CX3CR1-dependent fractalkine signaling. ITGA4:ITGB1 and ITGA5:ITGB1 bind to PLA2G2A via a site (site 2) which is distinct from the classical ligand-binding site (site 1) and this induces integrin conformational changes and enhanced ligand binding to site 1. ITGA5:ITGB1 acts as a receptor for fibrillin-1 (FBN1) and mediates R-G-D-dependent cell adhesion to FBN1. ITGA5:ITGB1 is a receptor for IL1B and binding is essential for IL1B signaling. ITGA5:ITGB3 is a receptor for soluble CD40LG and is required for CD40/CD40LG signaling. Plays an important role in myoblast differentiation and fusion during skeletal myogenesis. ITGA9:ITGB1 may play a crucial role in SVEP1/polydom-mediated myoblast cell adhesion. Integrins ITGA9:ITGB1 and ITGA4:ITGB1 repress PRKCA-mediated L-type voltage-gated channel Ca(2+) influx and ROCK-mediated calcium sensitivity in vascular smooth muscle cells via their interaction with SVEP1, thereby inhibit vasocontraction. This chain is Integrin beta-1 (ITGB1), found in Pongo abelii (Sumatran orangutan).